Reading from the N-terminus, the 537-residue chain is Phosphoenolpyruvate carboxykinase (ATP) (537 aa).

Residues arginine 61, tyrosine 195, and lysine 201 each coordinate substrate. Residues lysine 201, histidine 220, and 236 to 244 (GLSGTGKTT) contribute to the ATP site. Mn(2+) contacts are provided by lysine 201 and histidine 220. A Mn(2+)-binding site is contributed by aspartate 257. Glutamate 285 contributes to the ATP binding site. Basic and acidic residues predominate over residues 312 to 321 (DFNDGSKTEN). Residues 312-339 (DFNDGSKTENTRSAYPLESIPNASPTGR) form a disordered region. Arginine 323 serves as a coordination point for substrate. 2 residues coordinate ATP: arginine 323 and threonine 448.

It belongs to the phosphoenolpyruvate carboxykinase (ATP) family. Requires Mn(2+) as cofactor.

The protein localises to the cytoplasm. The catalysed reaction is oxaloacetate + ATP = phosphoenolpyruvate + ADP + CO2. Its pathway is carbohydrate biosynthesis; gluconeogenesis. In terms of biological role, involved in the gluconeogenesis. Catalyzes the conversion of oxaloacetate (OAA) to phosphoenolpyruvate (PEP) through direct phosphoryl transfer between the nucleoside triphosphate and OAA. This Rhodopseudomonas palustris (strain BisB18) protein is Phosphoenolpyruvate carboxykinase (ATP).